The primary structure comprises 271 residues: GPN-loop GTPase 3 (271 aa).

13–18 contributes to the GTP binding site; the sequence is GVGKST. Positions 70–72 match the Gly-Pro-Asn (GPN)-loop; involved in dimer interface motif; the sequence is GPN. 173–176 serves as a coordination point for GTP; the sequence is SKMD.

This sequence belongs to the GPN-loop GTPase family. In terms of assembly, heterodimers with GPN1 or GPN2. Binds to RNA polymerase II (RNAPII).

Functionally, small GTPase required for proper nuclear import of RNA polymerase II and III (RNAPII and RNAPIII). May act at an RNAP assembly step prior to nuclear import. This Yarrowia lipolytica (strain CLIB 122 / E 150) (Yeast) protein is GPN-loop GTPase 3.